Reading from the N-terminus, the 348-residue chain is D-lactate dehydrogenase kk1H (348 aa).

NAD(+)-binding positions include 158–159 (RI), Asp178, 208–209 (CP), 235–237 (TSR), and Asp261. Arg237 is an active-site residue. Glu266 is an active-site residue. Catalysis depends on His298, which acts as the Proton donor.

Belongs to the D-isomer specific 2-hydroxyacid dehydrogenase family.

It functions in the pathway secondary metabolite biosynthesis. Its function is as follows. D-lactate dehydrogenase; part of the gene cluster that mediates the biosynthesis of KK-1, a novel cyclic depsipeptide with 10 residues which is a promising active compound with high activity against many plant pathogens, especially Botrytis cinerea. Within the pathway, kk1H catalyzes in the synthesis of D-lactic acid from pyruvic acid, which is recognized by the A domain of the first kk1B module. The nonribosomal peptide synthetase (NRPS) kk1B catalyzes the elongation and cyclization of the decapeptide chain composed of 1 D-lactic acid residue (D-Lac), 1 pipecolic acid residue (Pip), 1 aspartic acid residue (Asp), 1 isoleucine residue (Ile), 1 glycine residue (Gly), 1 tyrosine residue (Tyr) and 4 valine residues (Val). The Asp, Ile and 3 Val residues are N-methylated by the 5 methyltransferase domains from the NRPS (found in modules 3, 5, 6, 7 and 9), whereas the Tyr residue is O-methylated by the cluster encoded O-methyltransferase kk1A. The thioesterase kk1J is likely to be involved in the corrective mechanism of peptide chain synthesis. The D-lactate dehydrogenase kk1H is involved in the synthesis of D-lactic acid from pyruvic acid, which is recognized by the A domain of the first kk1B module. The pyrroline-5-carboxylate reductase kk1I is involved in the synthesis of the L-pipecolic acid residue of KK-1 from delta-1-pyrroline-5-carboxylate (P5C), a metabolic intermediate of lysine. It still is unclear how kk1C and kk1D are involved in the production of KK-1. The protein is D-lactate dehydrogenase kk1H of Curvularia clavata.